The chain runs to 232 residues: RNA chaperone ProQ (232 aa).

The interval 105–182 is disordered; that stretch reads EAKARVQAQR…REEQHTPVSD (78 aa). 2 stretches are compositionally biased toward basic and acidic residues: residues 117 to 138 and 147 to 177; these read QQAK…PPRE and RRKE…EEQH.

The protein belongs to the ProQ family.

Its subcellular location is the cytoplasm. Functionally, RNA chaperone with significant RNA binding, RNA strand exchange and RNA duplexing activities. May regulate ProP activity through an RNA-based, post-transcriptional mechanism. This is RNA chaperone ProQ from Escherichia coli O139:H28 (strain E24377A / ETEC).